Reading from the N-terminus, the 178-residue chain is Large ribosomal subunit protein uL6 (178 aa).

It belongs to the universal ribosomal protein uL6 family. Part of the 50S ribosomal subunit.

Functionally, this protein binds to the 23S rRNA, and is important in its secondary structure. It is located near the subunit interface in the base of the L7/L12 stalk, and near the tRNA binding site of the peptidyltransferase center. The chain is Large ribosomal subunit protein uL6 from Wolinella succinogenes (strain ATCC 29543 / DSM 1740 / CCUG 13145 / JCM 31913 / LMG 7466 / NCTC 11488 / FDC 602W) (Vibrio succinogenes).